A 385-amino-acid chain; its full sequence is AA13 family lytic polysaccharide monooxygenase NCU08746 (385 aa).

Positions 1 to 18 (MKFSIISVALASAITVDA) are cleaved as a signal peptide. H19 is a binding site for Cu(2+). H19 is modified (methylhistidine). The region spanning 19-248 (HGYLTIPFSR…AQVYLSCADI (230 aa)) is the Chitin-binding type-4 domain. The cysteines at positions 40 and 43 are disulfide-linked. N54 carries N-linked (GlcNAc...) asparagine glycosylation. 6 disulfide bridges follow: C66–C245, C102–C203, C118–C145, C153–C161, C167–C173, and C181–C192. H109 lines the Cu(2+) pocket. Y242 lines the Cu(2+) pocket. The 108-residue stretch at 278–385 (CTPAATVAVT…ESVAVESSWK (108 aa)) folds into the CBM20 domain. An N-linked (GlcNAc...) asparagine glycan is attached at N365.

The protein belongs to the polysaccharide monooxygenase AA13 family. Cu(2+) serves as cofactor.

It localises to the secreted. The enzyme catalyses starch + reduced acceptor + O2 = D-glucono-1,5-lactone-terminated malto-oligosaccharides + short-chain malto-oligosaccharides + acceptor + H2O.. Starch-active lytic polysaccharide monooxygenase that oxidizes the C1 position of starch substrates, but not in cellulose or chitin. Catalysis by LPMOs requires the reduction of the active-site copper from Cu(II) to Cu(I) by a reducing agent and H(2)O(2) or O(2) as a cosubstrate. In Neurospora crassa (strain ATCC 24698 / 74-OR23-1A / CBS 708.71 / DSM 1257 / FGSC 987), this protein is AA13 family lytic polysaccharide monooxygenase NCU08746.